The following is a 215-amino-acid chain: Probable ribosome-binding factor A, chloroplastic (215 aa).

The transit peptide at Met-1 to Arg-52 directs the protein to the chloroplast. A compositionally biased stretch (basic and acidic residues) spans Lys-183 to Pro-192. A disordered region spans residues Lys-183–Asp-210. The segment covering Asp-194–Asp-210 has biased composition (acidic residues).

This sequence belongs to the RbfA family.

The protein resides in the plastid. Its subcellular location is the chloroplast. The polypeptide is Probable ribosome-binding factor A, chloroplastic (Arabidopsis thaliana (Mouse-ear cress)).